Reading from the N-terminus, the 219-residue chain is MVDLKTKAFDIAQNFTISLDGPAASGKGTIGLILAKKFALKYFQSSIVYRQLAFNCIHQQIDITDIDAVIALSQELKLDNNIDLENEDIGDIASKIAVISEVRNNLNHNLINLVKTTPRIIMEGRDIGTVVAPDADLKIFITASPYVRAVRRYNQLQAKGKTCILDEIIQQIILRDKRDKERKVGPLLPALGAFIIDTSKLSAIEVVEEVTNYIKNKIT.

21–29 (GPAASGKGT) is a binding site for ATP.

This sequence belongs to the cytidylate kinase family. Type 1 subfamily.

The protein localises to the cytoplasm. It catalyses the reaction CMP + ATP = CDP + ADP. The enzyme catalyses dCMP + ATP = dCDP + ADP. This Rickettsia typhi (strain ATCC VR-144 / Wilmington) protein is Cytidylate kinase.